The chain runs to 762 residues: 5-methyltetrahydropteroyltriglutamate--homocysteine methyltransferase (762 aa).

Residues 17–20 and Lys-111 each bind 5-methyltetrahydropteroyltri-L-glutamate; that span reads REWK. L-homocysteine-binding positions include 435–437 and Glu-488; that span reads IGS. Residues 435–437 and Glu-488 contribute to the L-methionine site; that span reads IGS. Residues 519–520 and Trp-565 each bind 5-methyltetrahydropteroyltri-L-glutamate; that span reads RC. Asp-603 contacts L-homocysteine. Residue Asp-603 coordinates L-methionine. Glu-609 is a 5-methyltetrahydropteroyltri-L-glutamate binding site. Zn(2+) is bound by residues His-645, Cys-647, and Glu-669. The active-site Proton donor is the His-698. Position 730 (Cys-730) interacts with Zn(2+).

Belongs to the vitamin-B12 independent methionine synthase family. It depends on Zn(2+) as a cofactor.

It carries out the reaction 5-methyltetrahydropteroyltri-L-glutamate + L-homocysteine = tetrahydropteroyltri-L-glutamate + L-methionine. The protein operates within amino-acid biosynthesis; L-methionine biosynthesis via de novo pathway; L-methionine from L-homocysteine (MetE route): step 1/1. In terms of biological role, catalyzes the transfer of a methyl group from 5-methyltetrahydrofolate to homocysteine resulting in methionine formation. The sequence is that of 5-methyltetrahydropteroyltriglutamate--homocysteine methyltransferase from Bacillus thuringiensis (strain Al Hakam).